We begin with the raw amino-acid sequence, 419 residues long: 3-oxo-isoapionate-4-phosphate decarboxylase (419 aa).

Positions 179, 181, and 182 each coordinate Mg(2+). Lys179 is subject to N6-carboxylysine.

The protein belongs to the RuBisCO large chain family. Mg(2+) serves as cofactor.

It carries out the reaction 3-oxoisoapionate 4-phosphate + H(+) = L-erythrulose 1-phosphate + CO2. Its pathway is carbohydrate metabolism. In terms of biological role, involved in catabolism of D-apiose. Catalyzes the decarboxylation of 3-oxo-isoapionate 4-phosphate to L-erythrulose 1-phosphate. This is 3-oxo-isoapionate-4-phosphate decarboxylase from Rhizobium rhizogenes (strain K84 / ATCC BAA-868) (Agrobacterium radiobacter).